Reading from the N-terminus, the 702-residue chain is Dynein intermediate chain 2, ciliary (702 aa).

Positions 1–11 (MPVKSTKTKGG) are enriched in low complexity. 3 disordered regions span residues 1 to 64 (MPVK…IKPD), 128 to 226 (DEAR…FSST), and 243 to 272 (QEKA…ETQS). Basic and acidic residues-rich tracts occupy residues 36–52 (GKKD…HGGE) and 152–176 (GEEK…RDEE). A compositionally biased stretch (polar residues) spans 189 to 206 (KLTNQFNFSERASQTYNN). Residues 243-261 (QEKAKEKKAAPSKKDDDKS) show a composition bias toward basic and acidic residues. WD repeat units follow at residues 380-420 (PTDS…ANPV), 429-472 (KHTD…LTYT), 490-533 (TQLT…QFLD), 537-577 (AHHM…GPMF), 580-620 (DLGS…YEPI), and 628-667 (KKKT…RKVP).

It belongs to the dynein intermediate chain family. As to quaternary structure, consists of at least two heavy chains (alpha and beta), three intermediate chains and several light chains.

Its subcellular location is the cytoplasm. It is found in the cytoskeleton. It localises to the cilium axoneme. Functionally, microtubule-binding protein that may be involved in dynein outer arm assembly on the axoneme. The polypeptide is Dynein intermediate chain 2, ciliary (Heliocidaris crassispina (Sea urchin)).